The sequence spans 369 residues: Chorismate synthase (369 aa).

Positions 48 and 54 each coordinate NADP(+). FMN-binding positions include 125–127, 238–239, G278, 293–297, and R319; these read RSS, NA, and KPTSS.

Belongs to the chorismate synthase family. As to quaternary structure, homotetramer. The cofactor is FMNH2.

It catalyses the reaction 5-O-(1-carboxyvinyl)-3-phosphoshikimate = chorismate + phosphate. It participates in metabolic intermediate biosynthesis; chorismate biosynthesis; chorismate from D-erythrose 4-phosphate and phosphoenolpyruvate: step 7/7. In terms of biological role, catalyzes the anti-1,4-elimination of the C-3 phosphate and the C-6 proR hydrogen from 5-enolpyruvylshikimate-3-phosphate (EPSP) to yield chorismate, which is the branch point compound that serves as the starting substrate for the three terminal pathways of aromatic amino acid biosynthesis. This reaction introduces a second double bond into the aromatic ring system. This Burkholderia mallei (strain ATCC 23344) protein is Chorismate synthase.